Reading from the N-terminus, the 248-residue chain is Triosephosphate isomerase (248 aa).

Asparagine 9–lysine 11 contacts substrate. Histidine 94 serves as the catalytic Electrophile. Glutamate 166 serves as the catalytic Proton acceptor. Residues glycine 172, serine 212, and glycine 233–glycine 234 contribute to the substrate site.

It belongs to the triosephosphate isomerase family. In terms of assembly, homodimer.

It localises to the cytoplasm. It catalyses the reaction D-glyceraldehyde 3-phosphate = dihydroxyacetone phosphate. It functions in the pathway carbohydrate biosynthesis; gluconeogenesis. It participates in carbohydrate degradation; glycolysis; D-glyceraldehyde 3-phosphate from glycerone phosphate: step 1/1. Functionally, involved in the gluconeogenesis. Catalyzes stereospecifically the conversion of dihydroxyacetone phosphate (DHAP) to D-glyceraldehyde-3-phosphate (G3P). The chain is Triosephosphate isomerase from Thermoanaerobacter pseudethanolicus (strain ATCC 33223 / 39E) (Clostridium thermohydrosulfuricum).